A 285-amino-acid polypeptide reads, in one-letter code: 2,3,4,5-tetrahydropyridine-2,6-dicarboxylate N-succinyltransferase (285 aa).

Residues Arg111 and Asp148 each contribute to the substrate site.

It belongs to the transferase hexapeptide repeat family. Homotrimer.

It localises to the cytoplasm. It catalyses the reaction (S)-2,3,4,5-tetrahydrodipicolinate + succinyl-CoA + H2O = (S)-2-succinylamino-6-oxoheptanedioate + CoA. Its pathway is amino-acid biosynthesis; L-lysine biosynthesis via DAP pathway; LL-2,6-diaminopimelate from (S)-tetrahydrodipicolinate (succinylase route): step 1/3. The sequence is that of 2,3,4,5-tetrahydropyridine-2,6-dicarboxylate N-succinyltransferase from Rhizobium rhizogenes (strain K84 / ATCC BAA-868) (Agrobacterium radiobacter).